We begin with the raw amino-acid sequence, 298 residues long: Tyrosine recombinase XerC (298 aa).

Residues 1–84 (MNHIQDAFLN…TLRTFYEYWM (84 aa)) enclose the Core-binding (CB) domain. The Tyr recombinase domain maps to 105 to 286 (YLPQFFYEEE…SNQQLRKVYL (182 aa)). Active-site residues include arginine 145, lysine 169, histidine 238, arginine 241, and histidine 264. Tyrosine 273 serves as the catalytic O-(3'-phospho-DNA)-tyrosine intermediate.

This sequence belongs to the 'phage' integrase family. XerC subfamily. As to quaternary structure, forms a cyclic heterotetrameric complex composed of two molecules of XerC and two molecules of XerD.

The protein localises to the cytoplasm. Site-specific tyrosine recombinase, which acts by catalyzing the cutting and rejoining of the recombining DNA molecules. The XerC-XerD complex is essential to convert dimers of the bacterial chromosome into monomers to permit their segregation at cell division. It also contributes to the segregational stability of plasmids. This Staphylococcus aureus (strain USA300) protein is Tyrosine recombinase XerC.